Reading from the N-terminus, the 295-residue chain is MDPMITGLGVVALMGAAATIAGAAEDLESDVGSQSNPNSQVQLAPQMGHLHRIINKAVSGEPVAYGTWCGIAGSVAYVLMQSMQLPVIMAIAVGAVIAAMVHTTYAVTSHMGRIVSQSQFNQPLFMDMLVQHLGPIAGHGFIVTFCIVGLSYLMTLPIPGFAHPFPLPLLAVLWGITIGAIGSSTGDVHYGAEREYQQYPFGGGIPVAIHGDITTKAELGARNSMDVVHFCAKYGGPLTGFAFGAIVFLSFWNTIVFGITGGIISGLIIVLLLIILNNRLEVFARNRYGPYKEDE.

7 consecutive transmembrane segments (helical) span residues 4–24 (MITG…AGAA), 60–80 (GEPV…YVLM), 87–107 (VIMA…TYAV), 140–160 (GFIV…PIPG), 161–181 (FAHP…IGAI), 234–254 (YGGP…FWNT), and 255–275 (IVFG…LLII).

Belongs to the MtrE family. The complex is composed of 8 subunits; MtrA, MtrB, MtrC, MtrD, MtrE, MtrF, MtrG and MtrH.

It localises to the cell membrane. It catalyses the reaction 5-methyl-5,6,7,8-tetrahydromethanopterin + coenzyme M + 2 Na(+)(in) = 5,6,7,8-tetrahydromethanopterin + methyl-coenzyme M + 2 Na(+)(out). It participates in one-carbon metabolism; methanogenesis from CO(2); methyl-coenzyme M from 5,10-methylene-5,6,7,8-tetrahydromethanopterin: step 2/2. Functionally, part of a complex that catalyzes the formation of methyl-coenzyme M and tetrahydromethanopterin from coenzyme M and methyl-tetrahydromethanopterin. This is an energy-conserving, sodium-ion translocating step. This is Tetrahydromethanopterin S-methyltransferase subunit E (mtrE) from Methanothermobacter thermautotrophicus (strain ATCC 29096 / DSM 1053 / JCM 10044 / NBRC 100330 / Delta H) (Methanobacterium thermoautotrophicum).